The primary structure comprises 390 residues: Aspergillopepsin-1 (390 aa).

A signal peptide spans M1–A19. Residues A20–A67 constitute a propeptide, activation peptide. An O-linked (Man...) threonine glycan is attached at T70. In terms of domain architecture, Peptidase A1 spans Y84–A387. Catalysis depends on residues D100 and D281.

This sequence belongs to the peptidase A1 family.

It is found in the secreted. It carries out the reaction Hydrolysis of proteins with broad specificity. Generally favors hydrophobic residues in P1 and P1', but also accepts Lys in P1, which leads to activation of trypsinogen. Does not clot milk.. Its activity is regulated as follows. Inhibited by the microbial peptide pepstatin. In terms of biological role, secreted aspartic endopeptidase that allows assimilation of proteinaceous substrates. The scissile peptide bond is attacked by a nucleophilic water molecule activated by two aspartic residues in the active site. Shows a broad primary substrate specificity. Favors hydrophobic residues at the P1 and P1' positions, but also accepts a lysine residue in the P1 position, leading to the activation of trypsinogen and chymotrypsinogen A. The protein is Aspergillopepsin-1 (pepA) of Aspergillus oryzae (Yellow koji mold).